The sequence spans 340 residues: Glyceraldehyde-3-phosphate dehydrogenase, cytosolic (340 aa).

Residues 16–17 (RI), Asp38, and Arg85 each bind NAD(+). D-glyceraldehyde 3-phosphate contacts are provided by residues 156-158 (SCT), Thr187, 216-217 (TG), and Arg239. The active-site Nucleophile is Cys157. Asn321 is an NAD(+) binding site.

This sequence belongs to the glyceraldehyde-3-phosphate dehydrogenase family. In terms of assembly, homotetramer.

The protein resides in the cytoplasm. It carries out the reaction D-glyceraldehyde 3-phosphate + phosphate + NAD(+) = (2R)-3-phospho-glyceroyl phosphate + NADH + H(+). It participates in carbohydrate degradation; glycolysis; pyruvate from D-glyceraldehyde 3-phosphate: step 1/5. Its function is as follows. Key enzyme in glycolysis that catalyzes the first step of the pathway by converting D-glyceraldehyde 3-phosphate (G3P) into 3-phospho-D-glyceroyl phosphate. Essential for the maintenance of cellular ATP levels and carbohydrate metabolism. In Ginkgo biloba (Ginkgo), this protein is Glyceraldehyde-3-phosphate dehydrogenase, cytosolic.